We begin with the raw amino-acid sequence, 152 residues long: Large ribosomal subunit protein uL22 (152 aa).

The protein belongs to the universal ribosomal protein uL22 family. As to quaternary structure, part of the 50S ribosomal subunit.

Functionally, this protein binds specifically to 23S rRNA. It makes multiple contacts with different domains of the 23S rRNA in the assembled 50S subunit and ribosome. Its function is as follows. The globular domain of the protein is located near the polypeptide exit tunnel on the outside of the subunit, while an extended beta-hairpin is found that lines the wall of the exit tunnel in the center of the 70S ribosome. The chain is Large ribosomal subunit protein uL22 from Methanothrix thermoacetophila (strain DSM 6194 / JCM 14653 / NBRC 101360 / PT) (Methanosaeta thermophila).